We begin with the raw amino-acid sequence, 1280 residues long: Papilin (1280 aa).

Positions 1-20 (MQLFPLLFSLLLTSTPGSWA) are cleaved as a signal peptide. 5 TSP type-1 domains span residues 27–81 (SDTW…ESCP), 305–362 (RGFS…QPCP), 363–422 (KTKR…ACNL), 424–482 (HCAV…EACP), and 485–540 (RGQA…QPCH). Cystine bridges form between Cys-39–Cys-75, Cys-43–Cys-80, and Cys-54–Cys-65. Cystine bridges form between Cys-425-Cys-464, Cys-436-Cys-476, and Cys-440-Cys-481. 2 disordered regions span residues 541–626 (LPQE…DCRH) and 672–715 (PQQA…PSEC). The span at 585–599 (AQSNPREGQDPNLSS) shows a compositional bias: polar residues. Over residues 706–715 (QAHEGEPSEC) the composition is skewed to basic and acidic residues. Disulfide bonds link Cys-750–Cys-800, Cys-759–Cys-783, and Cys-775–Cys-796. A BPTI/Kunitz inhibitor domain is found at 750–800 (CLLPSAQGSCGDWAARWYFVASVGRCNRFWYGGCHGNANNFASEQECMNTC). Positions 800-902 (CRGQHGPRRP…AVPPTHSPSY (103 aa)) are disordered. Positions 879–891 (IRPRVPGLDREAR) are enriched in basic and acidic residues. An Ig-like C2-type 1 domain is found at 900–990 (PSYRIRLAGS…EPQEIQLRVT (91 aa)). Residues Cys-926 and Cys-973 are joined by a disulfide bond. Residues 1002 to 1012 (PRHFPEPRNPD) show a composition bias toward basic and acidic residues. The segment at 1002 to 1042 (PRHFPEPRNPDLGHGPPHRGTGAEAGGHRVLSPSHPRPATR) is disordered. Ig-like C2-type domains are found at residues 1039–1128 (PATR…VQLR) and 1133–1218 (LTIT…TEVK). 2 disulfide bridges follow: Cys-1065–Cys-1112 and Cys-1154–Cys-1202. The PLAC domain occupies 1231–1270 (LGKDCIDQPELANCALILQAQLCGNEYYSSFCCASCSRFQ).

This sequence belongs to the papilin family.

The protein resides in the secreted. The chain is Papilin (Papln) from Mus musculus (Mouse).